Here is a 77-residue protein sequence, read N- to C-terminus: uncharacterized protein (77 aa).

The helical transmembrane segment at 49 to 71 (LVIASLILAIILLGILYYISYQM) threads the bilayer.

It localises to the membrane. This is an uncharacterized protein from Archaeoglobus fulgidus (strain ATCC 49558 / DSM 4304 / JCM 9628 / NBRC 100126 / VC-16).